The primary structure comprises 273 residues: Glutamate racemase (273 aa).

Substrate-binding positions include 11–12 (DS) and 43–44 (YG). Cysteine 74 (proton donor/acceptor) is an active-site residue. 75-76 (NT) serves as a coordination point for substrate. Residue cysteine 185 is the Proton donor/acceptor of the active site. 186–187 (TH) lines the substrate pocket.

It belongs to the aspartate/glutamate racemases family. As to quaternary structure, homodimer.

It catalyses the reaction L-glutamate = D-glutamate. The protein operates within cell wall biogenesis; peptidoglycan biosynthesis. Provides the (R)-glutamate required for cell wall biosynthesis. The protein is Glutamate racemase of Enterococcus faecalis (strain ATCC 700802 / V583).